A 224-amino-acid chain; its full sequence is Germin-like protein 8-10 (224 aa).

The N-terminal stretch at 1-22 is a signal peptide; the sequence is MASPSICLLAALLALVSWQAIA. A disulfide bridge connects residues cysteine 32 and cysteine 47. The region spanning 62 to 212 is the Cupin type-1 domain; sequence AMLDTPRKTN…AFQVEKGTID (151 aa). Residue asparagine 76 is glycosylated (N-linked (GlcNAc...) asparagine). 3 residues coordinate Mn(2+): histidine 109, histidine 111, and glutamate 116. Asparagine 135 carries N-linked (GlcNAc...) asparagine glycosylation. Histidine 157 provides a ligand contact to Mn(2+).

This sequence belongs to the germin family. Oligomer (believed to be a pentamer but probably hexamer).

The protein localises to the secreted. Its subcellular location is the extracellular space. It is found in the apoplast. Functionally, plays a role in broad-spectrum disease resistance. Probably has no oxalate oxidase activity even if the active site is conserved. The chain is Germin-like protein 8-10 (GLP2) from Oryza sativa subsp. japonica (Rice).